The primary structure comprises 807 residues: SWI/SNF complex subunit SWI3C (807 aa).

The tract at residues 1-74 (MPASEDRRGK…DPGLGIGEVV (74 aa)) is disordered. Positions 28 to 54 (EEEDMEEEDEENNNNNNEEMDDVENAD) are enriched in acidic residues. In terms of domain architecture, SWIRM spans 176–274 (HVLPMHSDWF…YCATAQSHPG (99 aa)). Residues 340-394 (LCDSHCNHCSRPLPTVYFQSQKKGDILLCCDCFHHGRFVVGHSCLDFVRVDPMKF) form a ZZ-type; degenerate zinc finger. Zn(2+) contacts are provided by Cys-345, Cys-348, Cys-368, and Cys-371. The SANT domain occupies 398–449 (QDGDNWTDQETLLLLEAVELYNENWVQIADHVGSKSKAQCILHFLRLPVEDG). Composition is skewed to polar residues over residues 458–467 (GVTNTENPTN) and 552–569 (ENQQ…NGAE). Disordered stretches follow at residues 458–487 (GVTN…SEQG) and 549–571 (LDGE…AEAQ). A coiled-coil region spans residues 598-656 (ADHEEREIQRLSANIVNHQLKRMELKLKQFAEIETLLMKECEQVEKTRQRFSAERARML). Composition is skewed to low complexity over residues 692–703 (QHQQQQASATSQ) and 726–739 (QQQQ…QQQQ). Disordered regions lie at residues 692–713 (QHQQ…FSNN), 721–740 (HFMA…QQQA), and 781–807 (SINQ…LGLN). A compositionally biased stretch (gly residues) spans 798-807 (SGSGSGLGLN).

As to quaternary structure, heterodimer. Interacts with SWI3A, SWI3B and BRM, but not with BSH. Interacts with MORC6 and SUVH9. As to expression, expressed in roots, stems, leaves, flowers and siliques.

Its subcellular location is the nucleus. Component of a multiprotein complex equivalent of the SWI/SNF complex, an ATP-dependent chromatin-remodeling complex, which is required for the positive and negative regulation of gene expression of a large number of genes. It changes chromatin structure by altering DNA-histone contacts within a nucleosome, leading eventually to a change in nucleosome position, thus facilitating or repressing binding of gene-specific transcription factors. The polypeptide is SWI/SNF complex subunit SWI3C (SWI3C) (Arabidopsis thaliana (Mouse-ear cress)).